Consider the following 1563-residue polypeptide: Rab-3-interacting molecule unc-10 (1563 aa).

Residues methionine 7–glutamate 133 form the RabBD domain. Over residues phenylalanine 25–glutamate 35 the composition is skewed to basic and acidic residues. Residues phenylalanine 25–aspartate 50 are disordered. The FYVE-type zinc finger occupies threonine 66–glutamine 121. Positions 72, 75, 88, 91, 96, 99, 113, and 116 each coordinate Zn(2+). Disordered regions lie at residues lysine 128–asparagine 466 and glycine 582–histidine 605. The span at asparagine 172–proline 182 shows a compositional bias: polar residues. 2 stretches are compositionally biased toward low complexity: residues asparagine 190 to threonine 284 and glutamine 300 to alanine 316. Basic and acidic residues predominate over residues glutamine 326–glutamate 345. 2 stretches are compositionally biased toward polar residues: residues arginine 356–asparagine 367 and glutamine 379–glutamate 389. Residues phenylalanine 395–arginine 415 are compositionally biased toward low complexity. The PDZ domain maps to histidine 643–arginine 733. The 123-residue stretch at isoleucine 840–cysteine 962 folds into the C2 1 domain. 3 disordered regions span residues glutamate 1054–aspartate 1163, glycine 1177–alanine 1311, and valine 1346–threonine 1373. The span at tryptophan 1086–threonine 1097 shows a compositional bias: polar residues. Positions tyrosine 1112–arginine 1121 are enriched in basic residues. Residues methionine 1129 to arginine 1154 are compositionally biased toward basic and acidic residues. Residues proline 1181–glutamine 1230 show a composition bias toward low complexity. The span at glycine 1242 to proline 1255 shows a compositional bias: polar residues. Positions threonine 1256–serine 1277 are enriched in low complexity. Positions phenylalanine 1278–arginine 1288 are enriched in polar residues. A compositionally biased stretch (low complexity) spans asparagine 1297–alanine 1311. Positions valine 1417 to tyrosine 1536 constitute a C2 2 domain.

As to expression, restricted to discrete puncta in synapse-rich regions of the nervous system including the nerve ring, the ventral nerve cord and the dorsal nerve cord. Localized expression was found in the head.

It localises to the synapse. Regulates the efficiency of a post-docking step of the release pathway. Acts after vesicle docking likely via regulating priming. May regulate the conformational changes in syntaxin. Binding of vesicles via rab-3[GTP] to Rim may signal the presence of a docked synaptic vesicle. Rim may then signal to unc-13 to change the conformation of syntaxin from the closed to the open state. Syntaxin could then engage synaptobrevin on the docked vesicle to form SNARE complexes and to prime the vesicle for release. Not required for the development or the structural organization of synapses. May play a role in regulating entry into the dauer state. The sequence is that of Rab-3-interacting molecule unc-10 from Caenorhabditis elegans.